The chain runs to 192 residues: Outer-membrane lipoprotein LolB (192 aa).

Residues 1 to 17 form the signal peptide; that stretch reads MTYRTLCILAFTALISA. Cys18 carries the N-palmitoyl cysteine lipid modification. The S-diacylglycerol cysteine moiety is linked to residue Cys18.

It belongs to the LolB family. Monomer.

Its subcellular location is the cell outer membrane. In terms of biological role, plays a critical role in the incorporation of lipoproteins in the outer membrane after they are released by the LolA protein. The protein is Outer-membrane lipoprotein LolB of Marinomonas sp. (strain MWYL1).